We begin with the raw amino-acid sequence, 877 residues long: Oligopeptide transporter 2 (877 aa).

The Cytoplasmic segment spans residues 1–167 (MSETVKDKVI…DPTIPVETFR (167 aa)). The chain crosses the membrane as a helical span at residues 168 to 188 (AYFLAIIWSVIGSGFNEFFSH). Position 189 (arginine 189) is a topological domain, extracellular. A helical membrane pass occupies residues 190-210 (VVSISLNTPIIQMFLYICGKA). The Cytoplasmic segment spans residues 211 to 240 (WAKTIPCWTITIRGRKYGINIDKPWTQKEQ). The helical transmembrane segment at 241–261 (MFSTLLYAICQGAFYTHYNIL) threads the bilayer. The Extracellular segment spans residues 262–272 (TQKLFYHSAFS). The chain crosses the membrane as a helical span at residues 273-293 (FGYQFLLSLSVQFIGFGFAGI). The Cytoplasmic segment spans residues 294-334 (LRKFVVYPARALWPTVMPTIAINKALLGKEKHESGMSRYKF). Residues 335-355 (FFLTFFIMFIYNWFPTYIINI) form a helical membrane-spanning segment. Topologically, residues 356 to 374 (LNTFNWMTWIKPSNINLAN) are extracellular. A glycan (N-linked (GlcNAc...) asparagine) is linked at asparagine 374. Residues 375 to 395 (ITGGVTGLGINPISSFDWNVI) form a helical membrane-spanning segment. Topologically, residues 396–404 (SFNSPLVYP) are cytoplasmic. A helical membrane pass occupies residues 405 to 425 (FWSYLTQYLGCILAALIVIAV). The Extracellular portion of the chain corresponds to 426–480 (YYSNYMSCQYLPIFTNSLYTNTGHSFKVTEVLDSDNKLDVKKYQSYSPPYYSAGN). Residues 481–501 (LVSYGAFICAYPLMITWSFIV) form a helical membrane-spanning segment. The Cytoplasmic portion of the chain corresponds to 502 to 553 (HSKLLFNAFKDWALNLWAMRKLKSWVTMFKSDYRALDDYDDPHSNAMKNYKE). Residues 554-574 (VPDWWYFAILIGSLVVGIAVV) traverse the membrane as a helical segment. Over 575 to 582 (EHYPTNTP) the chain is Extracellular. The helical transmembrane segment at 583–603 (VWGLFVCLGFNFVFLIPTTIL) threads the bilayer. Residues 604–614 (QATTGYSFGLN) are Cytoplasmic-facing. The chain crosses the membrane as a helical span at residues 615–635 (LLIEMVMGYALPGNPIAIMIL). Over 636-671 (KAFGYNIDGQADNYVSNLKIAHYCKIPPMALFRGQC) the chain is Extracellular. A helical membrane pass occupies residues 672–692 (VIVFIQIFVNLGVLNWQISNI). The Cytoplasmic portion of the chain corresponds to 693-730 (KDFCTPHQNAKFTCPDAVTYYNASVVWGAIGPKRIFNY). The chain crosses the membrane as a helical span at residues 731 to 751 (IYPIFKWCWLIGACIGIFFGV). Topologically, residues 752-766 (WKRWGKFYPRYFDPM) are extracellular. Residues 767–789 (LFVGGMLNMSPPYNLMYYTSGMI) form a helical membrane-spanning segment. At 790-811 (VSYISQYYMKRHHLNLWEKYNY) the chain is on the cytoplasmic side. The helical transmembrane segment at 812–832 (VLSAGFSTGLVLSAIIIFFAV) threads the bilayer. Topologically, residues 833-877 (QYKDTAFNWWGNTVPYAGADGVGYPLKNITDTANGYFGYAPGHYP) are extracellular. Asparagine 860 is a glycosylation site (N-linked (GlcNAc...) asparagine).

Belongs to the oligopeptide OPT transporter family.

The protein localises to the membrane. In terms of biological role, transports tetra- and pentapeptides. Does not transport glutathione. This Saccharomyces cerevisiae (strain ATCC 204508 / S288c) (Baker's yeast) protein is Oligopeptide transporter 2 (OPT2).